A 37-amino-acid polypeptide reads, in one-letter code: Cytochrome b6-f complex subunit 5 (37 aa).

The chain crosses the membrane as a helical span at residues 5–25; the sequence is LLSGIVLGMIPVTLAGLFVTA.

Belongs to the PetG family. As to quaternary structure, the 4 large subunits of the cytochrome b6-f complex are cytochrome b6, subunit IV (17 kDa polypeptide, PetD), cytochrome f and the Rieske protein, while the 4 small subunits are PetG, PetL, PetM and PetN. The complex functions as a dimer.

The protein resides in the plastid. Its subcellular location is the chloroplast thylakoid membrane. Functionally, component of the cytochrome b6-f complex, which mediates electron transfer between photosystem II (PSII) and photosystem I (PSI), cyclic electron flow around PSI, and state transitions. PetG is required for either the stability or assembly of the cytochrome b6-f complex. This chain is Cytochrome b6-f complex subunit 5, found in Staurastrum punctulatum (Green alga).